Reading from the N-terminus, the 223-residue chain is Ubiquitin-conjugating enzyme E2 S-A (223 aa).

Positions 11 to 157 (HIIRLVYKEV…ARLLTEIHGG (147 aa)) constitute a UBC core domain. Cys95 functions as the Glycyl thioester intermediate in the catalytic mechanism. The disordered stretch occupies residues 170-223 (QDLASGASASSADPMIPGVLGGAEGPMAKKHAGERDKKLAAKKKLDKKRALRRL). The segment covering 209-223 (AAKKKLDKKRALRRL) has biased composition (basic residues).

It belongs to the ubiquitin-conjugating enzyme family.

The enzyme catalyses S-ubiquitinyl-[E1 ubiquitin-activating enzyme]-L-cysteine + [E2 ubiquitin-conjugating enzyme]-L-cysteine = [E1 ubiquitin-activating enzyme]-L-cysteine + S-ubiquitinyl-[E2 ubiquitin-conjugating enzyme]-L-cysteine.. It functions in the pathway protein modification; protein ubiquitination. Functionally, catalyzes the covalent attachment of ubiquitin to other proteins. Acts as an essential factor of the anaphase promoting complex/cyclosome (APC/C), a cell cycle-regulated ubiquitin ligase that controls progression through mitosis. Acts by specifically elongating 'Lys-11'-linked polyubiquitin chains initiated by the E2 enzyme ube2c/ubch10 on APC/C substrates, enhancing the degradation of APC/C substrates by the proteasome and promoting mitotic exit. This is Ubiquitin-conjugating enzyme E2 S-A (ube2s-a) from Xenopus laevis (African clawed frog).